Consider the following 287-residue polypeptide: ATP synthase gamma chain (287 aa).

Belongs to the ATPase gamma chain family. As to quaternary structure, F-type ATPases have 2 components, CF(1) - the catalytic core - and CF(0) - the membrane proton channel. CF(1) has five subunits: alpha(3), beta(3), gamma(1), delta(1), epsilon(1). CF(0) has three main subunits: a, b and c.

It localises to the cell inner membrane. Functionally, produces ATP from ADP in the presence of a proton gradient across the membrane. The gamma chain is believed to be important in regulating ATPase activity and the flow of protons through the CF(0) complex. This is ATP synthase gamma chain from Ruthia magnifica subsp. Calyptogena magnifica.